A 443-amino-acid polypeptide reads, in one-letter code: Chromosomal replication initiator protein DnaA (443 aa).

The interval 1-76 is domain I, interacts with DnaA modulators; sequence METKALWEKL…KSVLNSYVSV (76 aa). Residues 76–99 form a domain II region; sequence VDFLTKEIFEKNTKKENKKEPINT. Residues 100-320 form a domain III, AAA+ region region; that stretch reads VLSENALTFE…GLVNRLLFFG (221 aa). ATP is bound by residues Gly145, Gly147, Lys148, and Thr149. Positions 321–443 are domain IV, binds dsDNA; sequence IQNDLGHIID…ESLKNEIIGK (123 aa).

Belongs to the DnaA family. Oligomerizes as a right-handed, spiral filament on DNA at oriC.

It is found in the cytoplasm. Its function is as follows. Plays an essential role in the initiation and regulation of chromosomal replication. ATP-DnaA binds to the origin of replication (oriC) to initiate formation of the DNA replication initiation complex once per cell cycle. Binds the DnaA box (a 9 base pair repeat at the origin) and separates the double-stranded (ds)DNA. Forms a right-handed helical filament on oriC DNA; dsDNA binds to the exterior of the filament while single-stranded (ss)DNA is stabiized in the filament's interior. The ATP-DnaA-oriC complex binds and stabilizes one strand of the AT-rich DNA unwinding element (DUE), permitting loading of DNA polymerase. After initiation quickly degrades to an ADP-DnaA complex that is not apt for DNA replication. Binds acidic phospholipids. In Mesoplasma florum (strain ATCC 33453 / NBRC 100688 / NCTC 11704 / L1) (Acholeplasma florum), this protein is Chromosomal replication initiator protein DnaA.